The following is a 164-amino-acid chain: Xanthine-guanine phosphoribosyltransferase (164 aa).

5-phospho-alpha-D-ribose 1-diphosphate is bound by residues 41–42 and 98–106; these read RG and DDLTDTGKT. Asp99 contributes to the Mg(2+) binding site. Guanine contacts are provided by Asp102 and Ile145. Xanthine contacts are provided by Asp102 and Ile145. GMP-binding positions include 102–106 and 144–145; these read DTGKT and WI.

This sequence belongs to the purine/pyrimidine phosphoribosyltransferase family. XGPT subfamily. Homotetramer. The cofactor is Mg(2+).

The protein resides in the cell inner membrane. It catalyses the reaction GMP + diphosphate = guanine + 5-phospho-alpha-D-ribose 1-diphosphate. The catalysed reaction is XMP + diphosphate = xanthine + 5-phospho-alpha-D-ribose 1-diphosphate. The enzyme catalyses IMP + diphosphate = hypoxanthine + 5-phospho-alpha-D-ribose 1-diphosphate. It functions in the pathway purine metabolism; GMP biosynthesis via salvage pathway; GMP from guanine: step 1/1. It participates in purine metabolism; XMP biosynthesis via salvage pathway; XMP from xanthine: step 1/1. Functionally, purine salvage pathway enzyme that catalyzes the transfer of the ribosyl-5-phosphate group from 5-phospho-alpha-D-ribose 1-diphosphate (PRPP) to the N9 position of the 6-oxopurines guanine and xanthine to form the corresponding ribonucleotides GMP (guanosine 5'-monophosphate) and XMP (xanthosine 5'-monophosphate), with the release of PPi. To a lesser extent, also acts on hypoxanthine. The polypeptide is Xanthine-guanine phosphoribosyltransferase (Rhizobium johnstonii (strain DSM 114642 / LMG 32736 / 3841) (Rhizobium leguminosarum bv. viciae)).